A 456-amino-acid chain; its full sequence is Protein COBRA (456 aa).

A signal peptide spans 1-36 (MESFFSRSTSIVSKLSFLALWIVFLISSSSFTSTEA). N-linked (GlcNAc...) asparagine glycans are attached at residues Asn45, Asn170, Asn178, Asn217, Asn242, Asn258, Asn328, Asn343, and Asn362. Residue Asn431 is the site of GPI-anchor amidated asparagine attachment. A propeptide spans 432–456 (GGSRSQFSFVAAVLLPLLVFFFFSA) (removed in mature form).

It belongs to the COBRA family. Expressed in roots, stems, leaves, flowers and siliques. Up-regulated in the root zone of rapid longitudinal expansion.

It localises to the lateral cell membrane. Involved in determining the orientation of cell expansion, probably by playing an important role in cellulose deposition. May act by recruiting cellulose synthesizing complexes to discrete positions on the cell surface. This is Protein COBRA (COB) from Arabidopsis thaliana (Mouse-ear cress).